The primary structure comprises 65 residues: Disintegrin CC8B (65 aa).

In terms of domain architecture, Disintegrin spans 1-65 (NSAHPCCDPV…DCPRNPWHKS (65 aa)). Cystine bridges form between Cys6–Cys29, Cys20–Cys26, Cys25–Cys50, and Cys38–Cys57. Residues 42–44 (WGD) carry the Cell attachment site; atypical (WGD) motif.

Belongs to the disintegrin family. Dimeric disintegrin subfamily. Heterodimer with CC8A; disulfide-linked. As to expression, expressed by the venom gland.

The protein localises to the secreted. In terms of biological role, inhibits integrins alpha-IIb/beta-3 (ITGA2B/ITGB3), alpha-V/beta-3 (ITGAV/ITGB3), and alpha-5/beta-1 (ITGA5/ITGB1). The sequence is that of Disintegrin CC8B from Cerastes cerastes (Horned desert viper).